The chain runs to 234 residues: Cell fusion protein dni1 (234 aa).

An N-terminal signal peptide occupies residues 1 to 32 (MLFLHSVVQGTGTLCTLAAWILLALVMTGCQS). Residues 33–96 (STTSKFQLFS…RSKFLINEVH (64 aa)) are Extracellular-facing. The chain crosses the membrane as a helical span at residues 97 to 117 (PWMIVFSFCVCGVSFLMGVVS). The Cytoplasmic segment spans residues 118–132 (SLPLIGRLEFLRNIR). The helical transmembrane segment at 133–153 (ISLSFFSFFSILVTALFAHVA) threads the bilayer. The Extracellular segment spans residues 154–178 (VSSFVMAVGNGTQNRVTASLGKKAM). The chain crosses the membrane as a helical span at residues 179–199 (IFLWCSMGLVTLTGITDSIIL). The Cytoplasmic portion of the chain corresponds to 200–234 (LVTSRTKKIRKTILEKSKVLTPSSSFSSKSSTTKY).

The protein belongs to the SUR7 family.

It is found in the cell membrane. It localises to the cell tip. Functionally, cell membrane protein which plays a relevant role in coordinating membrane organization and cell wall remodeling during mating. This Schizosaccharomyces pombe (strain 972 / ATCC 24843) (Fission yeast) protein is Cell fusion protein dni1 (dni1).